We begin with the raw amino-acid sequence, 91 residues long: DNA-binding protein HU (91 aa).

It belongs to the bacterial histone-like protein family. Homodimer.

Histone-like DNA-binding protein which is capable of wrapping DNA to stabilize it, and thus to prevent its denaturation under extreme environmental conditions. The sequence is that of DNA-binding protein HU (hup) from Lactococcus lactis subsp. lactis (strain IL1403) (Streptococcus lactis).